The sequence spans 228 residues: Cytochrome c oxidase subunit 2 (228 aa).

Residues Met-1–His-26 lie on the Mitochondrial intermembrane side of the membrane. Residues Ala-27–Asn-48 traverse the membrane as a helical segment. Residues Lys-49–Glu-62 lie on the Mitochondrial matrix side of the membrane. A helical transmembrane segment spans residues Thr-63–Arg-82. Residues Leu-83 to Ser-228 lie on the Mitochondrial intermembrane side of the membrane. Residues His-161, Cys-196, Glu-198, Cys-200, His-204, and Met-207 each contribute to the Cu cation site. Glu-198 lines the Mg(2+) pocket.

It belongs to the cytochrome c oxidase subunit 2 family. As to quaternary structure, component of the cytochrome c oxidase (complex IV, CIV), a multisubunit enzyme composed of a catalytic core of 3 subunits and several supernumerary subunits. The complex exists as a monomer or a dimer and forms supercomplexes (SCs) in the inner mitochondrial membrane with ubiquinol-cytochrome c oxidoreductase (cytochrome b-c1 complex, complex III, CIII). The cofactor is Cu cation.

The protein localises to the mitochondrion inner membrane. It catalyses the reaction 4 Fe(II)-[cytochrome c] + O2 + 8 H(+)(in) = 4 Fe(III)-[cytochrome c] + 2 H2O + 4 H(+)(out). Component of the cytochrome c oxidase, the last enzyme in the mitochondrial electron transport chain which drives oxidative phosphorylation. The respiratory chain contains 3 multisubunit complexes succinate dehydrogenase (complex II, CII), ubiquinol-cytochrome c oxidoreductase (cytochrome b-c1 complex, complex III, CIII) and cytochrome c oxidase (complex IV, CIV), that cooperate to transfer electrons derived from NADH and succinate to molecular oxygen, creating an electrochemical gradient over the inner membrane that drives transmembrane transport and the ATP synthase. Cytochrome c oxidase is the component of the respiratory chain that catalyzes the reduction of oxygen to water. Electrons originating from reduced cytochrome c in the intermembrane space (IMS) are transferred via the dinuclear copper A center (CU(A)) of subunit 2 and heme A of subunit 1 to the active site in subunit 1, a binuclear center (BNC) formed by heme A3 and copper B (CU(B)). The BNC reduces molecular oxygen to 2 water molecules using 4 electrons from cytochrome c in the IMS and 4 protons from the mitochondrial matrix. This Artemia franciscana (Brine shrimp) protein is Cytochrome c oxidase subunit 2 (COII).